We begin with the raw amino-acid sequence, 735 residues long: Protein STRUBBELIG-RECEPTOR FAMILY 2 (735 aa).

The first 23 residues, 1–23 (MKTKQQLRFLATILLTTILFVLA), serve as a signal peptide directing secretion. Residues 24 to 297 (KTDTDPLEVL…KKKKKGIGAG (274 aa)) are Extracellular-facing. LRR repeat units follow at residues 78 to 94 (LREL…LQHL), 96 to 119 (NLKI…PPNA), 120 to 140 (THIN…LPLM), 142 to 163 (SLQS…VFSG), 165 to 187 (QIKE…FGTL), 189 to 211 (NLTS…ADLP), 212 to 232 (LADL…HFQS), and 233 to 253 (IPHL…KPWK). 5 N-linked (GlcNAc...) asparagine glycosylation sites follow: asparagine 118, asparagine 128, asparagine 147, asparagine 175, and asparagine 189. Asparagine 264 is a glycosylation site (N-linked (GlcNAc...) asparagine). Residues 298-318 (STFLLVGGLALLGTFFALFAV) traverse the membrane as a helical segment. The Cytoplasmic segment spans residues 319–735 (RMNHRRAQNL…SSPTFSYLSS (417 aa)). The disordered stretch occupies residues 358-378 (PQIKRFQPPPAPQLRHLPSPP). Residues 415 to 695 (FSEENLLGEG…EIVEALTALI (281 aa)) enclose the Protein kinase domain.

This sequence belongs to the protein kinase superfamily. Ser/Thr protein kinase family. Expressed in seedlings, roots, stems, leaves, flowers and siliques.

Its subcellular location is the membrane. The protein is Protein STRUBBELIG-RECEPTOR FAMILY 2 (SRF2) of Arabidopsis thaliana (Mouse-ear cress).